A 318-amino-acid chain; its full sequence is tRNA-dihydrouridine(16) synthase (318 aa).

FMN contacts are provided by residues 7–9 and glutamine 68; that span reads PME. Cysteine 98 serves as the catalytic Proton donor. Residues lysine 139, 200 to 202, and 224 to 225 contribute to the FMN site; these read NGE and CR.

Belongs to the Dus family. DusC subfamily. FMN serves as cofactor.

It catalyses the reaction 5,6-dihydrouridine(16) in tRNA + NADP(+) = uridine(16) in tRNA + NADPH + H(+). The enzyme catalyses 5,6-dihydrouridine(16) in tRNA + NAD(+) = uridine(16) in tRNA + NADH + H(+). Catalyzes the synthesis of 5,6-dihydrouridine (D), a modified base found in the D-loop of most tRNAs, via the reduction of the C5-C6 double bond in target uridines. Specifically modifies U16 in tRNAs. The protein is tRNA-dihydrouridine(16) synthase of Vibrio vulnificus (strain CMCP6).